A 921-amino-acid chain; its full sequence is Sodium/calcium exchanger 2 (921 aa).

A signal peptide spans 1 to 20 (MAPLALVGVALLLGAPHCLG). Topologically, residues 21–68 (EATPTPSLPPPPANDSDASPGGCQGSYRCQPGVLLPVWEPDDPSLGDK) are extracellular. The disordered stretch occupies residues 23–42 (TPTPSLPPPPANDSDASPGG). A glycan (N-linked (GlcNAc...) asparagine) is linked at asparagine 34. Residues 69 to 90 (AARAVVYFVAMVYMFLGLSIIA) traverse the membrane as a helical segment. Residues 91–130 (DRFMASIEVITSKEKEITITKANGETSVGTVRIWNETVSN) are Cytoplasmic-facing. A helical transmembrane segment spans residues 131–152 (LTLMALGSSAPEILLSVIEVCG). The Alpha-1 repeat unit spans residues 135-175 (ALGSSAPEILLSVIEVCGHNFQAGELGPGTIVGSAAFNMFV). The Extracellular portion of the chain corresponds to 153 to 164 (HNFQAGELGPGT). A helical transmembrane segment spans residues 165-185 (IVGSAAFNMFVVIAVCVYVIP). The Cytoplasmic portion of the chain corresponds to 186 to 196 (AGESRKIKHLR). Residues 197 to 219 (VFFVTASWSIFAYVWLYLILAVF) traverse the membrane as a helical segment. The Extracellular segment spans residues 220 to 222 (SPG). Residues 223–246 (VVQVWEALLTLVFFPVCVVFAWMA) form a helical membrane-spanning segment. Residues 247 to 720 (DKRLLFYKYV…DGSREERLPS (474 aa)) are Cytoplasmic-facing. The putative calmodulin-binding region stretch occupies residues 248 to 267 (KRLLFYKYVYKRYRTDPRSG). Positions 372-391 (AADAARRPGANDGAPDDEDD) are disordered. Calx-beta domains lie at 384–483 (GAPD…VRLL) and 512–612 (ATVT…IELG). Glutamate 407, aspartate 443, aspartate 468, aspartate 469, isoleucine 471, glutamate 473, glutamate 476, aspartate 518, aspartate 519, aspartate 520, glutamate 536, aspartate 598, glutamate 599, and glutamate 600 together coordinate Ca(2+). Serine 622 is subject to Phosphoserine. Glutamate 665 contacts Ca(2+). The chain crosses the membrane as a helical span at residues 721 to 740 (CFDYVMHFLTVFWKVLFACL). Over 741 to 747 (PPTEYCH) the chain is Extracellular. Residues 748 to 770 (GWACFGVCILVIGLLTALIGDLA) form a helical membrane-spanning segment. Residues 771–772 (SH) are Cytoplasmic-facing. Residues 773–791 (FGCTVGLKDSVNAVVFVAL) traverse the membrane as a helical segment. Residues 790-826 (ALGTSIPDTFASKVAALQDQCADASIGNVTGSNAVNV) form an Alpha-2 repeat. Over 792-822 (GTSIPDTFASKVAALQDQCADASIGNVTGSN) the chain is Extracellular. N-linked (GlcNAc...) asparagine glycosylation is present at asparagine 817. Residues 823-843 (AVNVFLGLGVAWSVAAVYWAV) traverse the membrane as a helical segment. The Cytoplasmic portion of the chain corresponds to 844 to 854 (QGRPFEVRTGT). The helical transmembrane segment at 855–875 (LAFSVTLFTVFAFVGIAVLLY) threads the bilayer. Residues 876 to 892 (RRRPHIGGELGGPRGPK) are Extracellular-facing. A helical transmembrane segment spans residues 893 to 909 (LATTALFLGLWFLYILF). The Cytoplasmic portion of the chain corresponds to 910–921 (ASLEAYCHIRGF).

It belongs to the Ca(2+):cation antiporter (CaCA) (TC 2.A.19) family. SLC8 subfamily. As to expression, detected in neocortex and hippocampus on pyramidal cells, astrocyte processes and dendrites (at protein level). Brain and skeletal muscle.

The protein localises to the cell membrane. It is found in the basolateral cell membrane. It localises to the perikaryon. Its subcellular location is the cell projection. The protein resides in the dendrite. The protein localises to the dendritic spine. It catalyses the reaction Ca(2+)(in) + 3 Na(+)(out) = Ca(2+)(out) + 3 Na(+)(in). Its activity is regulated as follows. Calcium transport is down-regulated by Na(+) and stimulated by Ca(2+). In terms of biological role, mediates the electrogenic exchange of Ca(2+) against Na(+) ions across the cell membrane, and thereby contributes to the regulation of cytoplasmic Ca(2+) levels and Ca(2+)-dependent cellular processes. Contributes to cellular Ca(2+) homeostasis in excitable cells. Contributes to the rapid decrease of cytoplasmic Ca(2+) levels back to baseline after neuronal activation, and thereby contributes to modulate synaptic plasticity, learning and memory. Plays a role in regulating urinary Ca(2+) and Na(+) excretion. This chain is Sodium/calcium exchanger 2 (Slc8a2), found in Rattus norvegicus (Rat).